A 308-amino-acid polypeptide reads, in one-letter code: MRPRITFRPLHGILLLDKPAGLSSNNALQAARRLLRAEKGGHTGSLDPLATGLLPLCFGEATKIAGLLLGSAKAYDAEIVLGVTTDTDDADGQPLRERSVPALSEAALQAALAPFIGRIQQQAPIYSALKQGGEPLYAKARRGEVIEAPVREVEVHAITLTSYASPRLRLRVTCGSGTYIRSLARDLGEVLGCGAHIAALRRVWVEPFRTPEMITLEALTALVESGADAAQLLLPVAAGLSDFAQITLDATLAARFRMGQRLRDPAFPEGQVAVFDADGSPAGLGLVDADGRLSPQRLFNGLNAAAAC.

D47 serves as the catalytic Nucleophile.

This sequence belongs to the pseudouridine synthase TruB family. Type 1 subfamily.

The catalysed reaction is uridine(55) in tRNA = pseudouridine(55) in tRNA. Responsible for synthesis of pseudouridine from uracil-55 in the psi GC loop of transfer RNAs. The chain is tRNA pseudouridine synthase B from Xanthomonas campestris pv. campestris (strain 8004).